Reading from the N-terminus, the 534-residue chain is Dual specificity calcium/calmodulin-dependent 3',5'-cyclic nucleotide phosphodiesterase 1B (534 aa).

The tract at residues 1–21 (MELSPRSPPEMLESDCPSPLE) is disordered. Residues serine 7 and serine 14 each carry the phosphoserine modification. 2 calmodulin-binding regions span residues 27 to 47 (SKKM…QLEN) and 116 to 139 (EKPK…MFRR). The 358-residue stretch at 144–501 (VGPTYSTAVL…QKWKERAASG (358 aa)) folds into the PDEase domain. Catalysis depends on histidine 221, which acts as the Proton donor. The Zn(2+) site is built by histidine 225, histidine 261, aspartate 262, and aspartate 368. Position 262 (aspartate 262) interacts with Mg(2+). Disordered regions lie at residues 442–473 (VQPT…GDPN) and 494–534 (WKER…GNLD). A compositionally biased stretch (polar residues) spans 453–462 (KNQPSFQWRQ). Phosphoserine occurs at positions 464 and 512.

It belongs to the cyclic nucleotide phosphodiesterase family. PDE1 subfamily. As to quaternary structure, homodimer. It depends on Zn(2+) as a cofactor. The cofactor is Mg(2+). In terms of tissue distribution, expressed in central nervous system regions. Most abundant in basal ganglia. Also found in kidney papilla and adrenal medulla.

It localises to the cytoplasm. It is found in the cytosol. It carries out the reaction a nucleoside 3',5'-cyclic phosphate + H2O = a nucleoside 5'-phosphate + H(+). The catalysed reaction is 3',5'-cyclic GMP + H2O = GMP + H(+). The enzyme catalyses 3',5'-cyclic AMP + H2O = AMP + H(+). With respect to regulation, type I PDE are activated by the binding of calmodulin in the presence of Ca(2+). Its function is as follows. Cyclic nucleotide phosphodiesterase with a dual specificity for the second messengers cAMP and cGMP, which are key regulators of many important physiological processes. Has a preference for cGMP as a substrate. The polypeptide is Dual specificity calcium/calmodulin-dependent 3',5'-cyclic nucleotide phosphodiesterase 1B (Bos taurus (Bovine)).